The primary structure comprises 487 residues: 2-aminomuconic semialdehyde dehydrogenase (487 aa).

Residue 209–215 (GTGPRVG) participates in NAD(+) binding. The Proton acceptor role is filled by Glu-253. Cys-287 (nucleophile) is an active-site residue. At Ser-362 the chain carries Phosphoserine.

It belongs to the aldehyde dehydrogenase family. As to expression, highly expressed in adult kidney and liver. Detected at lower levels in fetal liver and kidney.

It localises to the cytoplasm. It carries out the reaction 2-aminomuconate 6-semialdehyde + NAD(+) + H2O = (2Z,4E)-2-aminomuconate + NADH + 2 H(+). Its pathway is amino-acid degradation; L-kynurenine degradation. Functionally, catalyzes the NAD-dependent oxidation of 2-aminomuconic semialdehyde of the kynurenine metabolic pathway in L-tryptophan degradation. The polypeptide is 2-aminomuconic semialdehyde dehydrogenase (Homo sapiens (Human)).